A 33-amino-acid chain; its full sequence is Cysteine-rich venom protein (33 aa).

The tract at residues Asn-1 to Ala-33 is disordered. The span at Ser-24–Ala-33 shows a compositional bias: basic residues.

It belongs to the CRISP family. Contains 8 disulfide bonds. Expressed by the venom gland.

It localises to the secreted. In terms of biological role, blocks contraction of smooth muscle elicited by high potassium-induced depolarization, but does not block caffeine-stimulated contraction. May target voltage-gated calcium channels on smooth muscle (Cav). In Naja naja (Indian cobra), this protein is Cysteine-rich venom protein.